The chain runs to 63 residues: uncharacterized protein (63 aa).

This is an uncharacterized protein from Avena byzantina (Oat).